Consider the following 557-residue polypeptide: Estrogen receptor beta (557 aa).

Residues M1–Y154 form a modulating region. 2 consecutive NR C4-type zinc fingers follow at residues C155 to C175 and C191 to C215. The nuclear receptor DNA-binding region spans C155 to M220. The disordered stretch occupies residues L240–K268. The 237-residue stretch at T272–H508 folds into the NR LBD domain. Residues S513–Q557 form a disordered region. Polar residues predominate over residues G539 to Q557.

This sequence belongs to the nuclear hormone receptor family. NR3 subfamily. Binds DNA as a homodimer. Can form a heterodimer with ER-alpha.

It localises to the nucleus. Its function is as follows. Binds estrogens with an affinity similar to that of ER-alpha, and activates expression of reporter genes containing estrogen response elements (ERE) in an estrogen-dependent manner. This chain is Estrogen receptor beta (esr2), found in Oreochromis niloticus (Nile tilapia).